The following is a 202-amino-acid chain: MNALETQGLGMIPMVIEQSGRGERSYDIYSRLLKERVIFLVGPVNDQTANLVVAQLLFLESENPDKDISFYINSPGGSVSAGMAIFDTMNFIKPDVSTLCTGMAASMGAFLLAAGAKGKRFALPNSKVMIHQPLGGMQGQATEIEIHAREILKTREQLNKILAERTGQPLEKIQRDTERDYFLSADESREYGLVDQVIHRRS.

The Nucleophile role is filled by S106. The active site involves H131.

It belongs to the peptidase S14 family. As to quaternary structure, fourteen ClpP subunits assemble into 2 heptameric rings which stack back to back to give a disk-like structure with a central cavity, resembling the structure of eukaryotic proteasomes.

It localises to the cytoplasm. It carries out the reaction Hydrolysis of proteins to small peptides in the presence of ATP and magnesium. alpha-casein is the usual test substrate. In the absence of ATP, only oligopeptides shorter than five residues are hydrolyzed (such as succinyl-Leu-Tyr-|-NHMec, and Leu-Tyr-Leu-|-Tyr-Trp, in which cleavage of the -Tyr-|-Leu- and -Tyr-|-Trp bonds also occurs).. Functionally, cleaves peptides in various proteins in a process that requires ATP hydrolysis. Has a chymotrypsin-like activity. Plays a major role in the degradation of misfolded proteins. The polypeptide is ATP-dependent Clp protease proteolytic subunit (Verminephrobacter eiseniae (strain EF01-2)).